The following is a 470-amino-acid chain: MKIYNTLTKAKEEFIPLQEGKVSMYVCGPTVYNYIHIGNARPVVVFDTVRRYLEYKGYDVNFVSNFTDVDDKIIKKANEEGVSAHEISERYIKEYLKDTEALNVLPVTTRPKATEEIDGMIDMIEELIEKGHAYEKNGTVYFKTRSFKQYGKLSKKNIDDLEAGARIAVADEKDDPMDFVLWKPKKVGEPAWSAPWCDGRPGWHIECSVMSKKYLGDQIDIHAGGEDLIFPHHENEIAQTECCTGKEFAKYWMHNGFLNVDNKKMSKSEGNFFTVREIFAEYAPAVLRFFLLSVNYRSPINFSRDIIESSKNGLERIQTAVEQLHFLAKVKAEKGELSTELTESESTLLKEFDALIKKFEDAMDDDFNTADAISSIFEMVKLSNTYVTVESSVEMIQKVLSNITTFCDILGLETEKKAEILDEEIEQLIADRQSARKAKDFAKSDEIRNLLLEKGIILEDTREGVKWKRA.

Residue Cys-27 participates in Zn(2+) binding. Positions 29–39 (PTVYNYIHIGN) match the 'HIGH' region motif. 3 residues coordinate Zn(2+): Cys-207, His-232, and Glu-236. The short motif at 264–268 (KMSKS) is the 'KMSKS' region element. Residue Lys-267 coordinates ATP.

This sequence belongs to the class-I aminoacyl-tRNA synthetase family. As to quaternary structure, monomer. Zn(2+) serves as cofactor.

It localises to the cytoplasm. It catalyses the reaction tRNA(Cys) + L-cysteine + ATP = L-cysteinyl-tRNA(Cys) + AMP + diphosphate. The protein is Cysteine--tRNA ligase of Lachnoclostridium phytofermentans (strain ATCC 700394 / DSM 18823 / ISDg) (Clostridium phytofermentans).